We begin with the raw amino-acid sequence, 418 residues long: Phosphopentomutase (418 aa).

Residues Asp10, Asp297, His302, Asp338, His339, and His350 each contribute to the Mn(2+) site.

The protein belongs to the phosphopentomutase family. Requires Mn(2+) as cofactor.

The protein localises to the cytoplasm. It carries out the reaction 2-deoxy-alpha-D-ribose 1-phosphate = 2-deoxy-D-ribose 5-phosphate. The enzyme catalyses alpha-D-ribose 1-phosphate = D-ribose 5-phosphate. Its pathway is carbohydrate degradation; 2-deoxy-D-ribose 1-phosphate degradation; D-glyceraldehyde 3-phosphate and acetaldehyde from 2-deoxy-alpha-D-ribose 1-phosphate: step 1/2. Isomerase that catalyzes the conversion of deoxy-ribose 1-phosphate (dRib-1-P) and ribose 1-phosphate (Rib-1-P) to deoxy-ribose 5-phosphate (dRib-5-P) and ribose 5-phosphate (Rib-5-P), respectively. This is Phosphopentomutase from Chromohalobacter salexigens (strain ATCC BAA-138 / DSM 3043 / CIP 106854 / NCIMB 13768 / 1H11).